We begin with the raw amino-acid sequence, 211 residues long: Putative ankyrin repeat protein R810 (211 aa).

ANK repeat units follow at residues 31–61, 72–101, 103–131, 133–162, and 163–191; these read TKFI…NLKY, NIND…DICA, QNSP…KFFG, YSSA…FCLE, and MEIA…SYFD.

The sequence is that of Putative ankyrin repeat protein R810 from Acanthamoeba polyphaga mimivirus (APMV).